Here is a 187-residue protein sequence, read N- to C-terminus: Elongation factor P (187 aa).

The protein belongs to the elongation factor P family.

The protein resides in the cytoplasm. The protein operates within protein biosynthesis; polypeptide chain elongation. Its function is as follows. Involved in peptide bond synthesis. Stimulates efficient translation and peptide-bond synthesis on native or reconstituted 70S ribosomes in vitro. Probably functions indirectly by altering the affinity of the ribosome for aminoacyl-tRNA, thus increasing their reactivity as acceptors for peptidyl transferase. The polypeptide is Elongation factor P (Helicobacter pylori (strain G27)).